Here is a 2325-residue protein sequence, read N- to C-terminus: Otogelin-like protein (2325 aa).

The N-terminal stretch at Met1–Ala22 is a signal peptide. Positions Gly112–Val288 constitute a VWFD 1 domain. Disulfide bonds link Cys114/Cys248 and Cys136/Cys287. Asn425 is a glycosylation site (N-linked (GlcNAc...) asparagine). Residues Val472–Phe645 form the VWFD 2 domain. Intrachain disulfides connect Cys474–Cys609, Cys496–Cys644, and Cys518–Cys526. The TIL 1 domain maps to Cys736–Cys791. Residues Asn817 and Asn867 are each glycosylated (N-linked (GlcNAc...) asparagine). Positions Ala937–Glu1114 constitute a VWFD 3 domain. Intrachain disulfides connect Cys939–Cys1069, Cys961–Cys1113, and Cys983–Cys990. N-linked (GlcNAc...) asparagine glycosylation is present at Asn1280. The region spanning Arg1366 to Cys1418 is the TIL 2 domain. The VWFD 4 domain maps to Cys1506–Val1695. Cystine bridges form between Cys1508/Cys1655 and Cys1549/Cys1571. 2 N-linked (GlcNAc...) asparagine glycosylation sites follow: Asn1576 and Asn2170. Intrachain disulfides connect Cys2233-Cys2289, Cys2254-Cys2303, Cys2265-Cys2320, and Cys2269-Cys2322. The region spanning Cys2233–Asn2325 is the CTCK domain. N-linked (GlcNAc...) asparagine glycosylation occurs at Asn2296.

It belongs to the otogelin family.

Its subcellular location is the secreted. This chain is Otogelin-like protein (Otogl), found in Mus musculus (Mouse).